We begin with the raw amino-acid sequence, 119 residues long: Large ribosomal subunit protein bL19 (119 aa).

This sequence belongs to the bacterial ribosomal protein bL19 family.

Its function is as follows. This protein is located at the 30S-50S ribosomal subunit interface and may play a role in the structure and function of the aminoacyl-tRNA binding site. The chain is Large ribosomal subunit protein bL19 from Pseudoalteromonas translucida (strain TAC 125).